The chain runs to 704 residues: Phosphatidylinositol-3,5-bisphosphate 3-phosphatase MTMR8 (704 aa).

The 375-residue stretch at 126-500 folds into the Myotubularin phosphatase domain; the sequence is GWKLIDPISD…YNIQFWCGMY (375 aa). 3 residues coordinate a 1,2-diacyl-sn-glycero-3-phospho-(1D-myo-inositol-3,5-bisphosphate): Asn-250, Asn-275, and Ile-276. The a 1,2-diacyl-sn-glycero-3-phospho-(1D-myo-inositol-3-phosphate) site is built by Asn-250, Asn-275, and Ile-276. Cys-338 functions as the Phosphocysteine intermediate in the catalytic mechanism. A 1,2-diacyl-sn-glycero-3-phospho-(1D-myo-inositol-3,5-bisphosphate) contacts are provided by Ser-339, Asp-340, Gly-341, Trp-342, Asp-343, Arg-344, Lys-380, and Arg-384. A 1,2-diacyl-sn-glycero-3-phospho-(1D-myo-inositol-3-phosphate) is bound by residues Ser-339, Asp-340, Gly-341, Trp-342, Asp-343, and Arg-344. Residues Ser-339 and Asp-340 each coordinate phosphate. Phosphate-binding residues include Trp-342, Asp-343, and Arg-344. Residue Arg-384 participates in a 1,2-diacyl-sn-glycero-3-phospho-(1D-myo-inositol-3-phosphate) binding. A coiled-coil region spans residues 515–541; that stretch reads ESLLEIKKQRAMLETDVHELEKKLKVR.

The protein belongs to the protein-tyrosine phosphatase family. Non-receptor class myotubularin subfamily. In terms of assembly, homodimer. Heterodimer with MTMR9.

It localises to the nucleus envelope. It carries out the reaction a 1,2-diacyl-sn-glycero-3-phospho-(1D-myo-inositol-3,5-bisphosphate) + H2O = a 1,2-diacyl-sn-glycero-3-phospho-(1D-myo-inositol-5-phosphate) + phosphate. It catalyses the reaction a 1,2-diacyl-sn-glycero-3-phospho-(1D-myo-inositol-3-phosphate) + H2O = a 1,2-diacyl-sn-glycero-3-phospho-(1D-myo-inositol) + phosphate. The catalysed reaction is 1,2-dioctanoyl-sn-glycero-3-phospho-(1D-myo-inositol-3,5-bisphosphate) + H2O = 1,2-dioctanoyl-sn-glycero-3-phospho-(1D-myo-inositol-5-phosphate) + phosphate. Interaction with MTMR9 increases phosphatase activity. Its function is as follows. Lipid phosphatase that specifically dephosphorylates the D-3 position of phosphatidylinositol 3-phosphate and phosphatidylinositol 3,5-bisphosphate, generating phosphatidylinositol and phosphatidylinositol 5-phosphate. In complex with MTMR9, negatively regulates autophagy. The chain is Phosphatidylinositol-3,5-bisphosphate 3-phosphatase MTMR8 from Homo sapiens (Human).